Consider the following 156-residue polypeptide: Ribosomal RNA large subunit methyltransferase H (156 aa).

S-adenosyl-L-methionine is bound by residues leucine 73, glycine 104, and 123-128; that span reads ISSLTL.

Belongs to the RNA methyltransferase RlmH family. As to quaternary structure, homodimer.

It is found in the cytoplasm. It catalyses the reaction pseudouridine(1915) in 23S rRNA + S-adenosyl-L-methionine = N(3)-methylpseudouridine(1915) in 23S rRNA + S-adenosyl-L-homocysteine + H(+). Specifically methylates the pseudouridine at position 1915 (m3Psi1915) in 23S rRNA. The polypeptide is Ribosomal RNA large subunit methyltransferase H (Herminiimonas arsenicoxydans).